Reading from the N-terminus, the 459-residue chain is MNPPTNPRACSPLARAGSFAPIHVVGGGLAGTEAAWQIAQAGLPVILSEMRPVRQSPAHHTDQLGELVCSNSFGAAASDRAAGLLKEELRQLGSLVIATADCHAVPAGGALAVDRARFSQALTEAIQNHPRITLRREEVTEIPEGIAVLCTGPLTSDPLAKALQAFTGLEYLSFFDASSPIVTGDSLNRAVVFQASRYDKGEAAYLNCPMTEAEYERFWRALVEAEQAPLKDFEREERKFFEGCLPIEEMARRGKDTLCFGPLKPVGLVDPRTGSRPYAVVQLRQEDKAGQLWNLVGFQTNLKWGEQQRVFRLIPGLEQAEFVRFGVMHRNTFLNSPQLLWPTLQFRRRPTLFAAGQLVGTEGYACAVAGGWLAGQNAARLALGLPLITLPPETMMGSLFQFISSADPRHFQPMPANFGLLPDLEGRKLRNKQERYGRYRDRALAALKTTGLVRQVQTA.

Position 26 to 31 (26 to 31 (GGGLAG)) interacts with FAD.

It belongs to the MnmG family. TrmFO subfamily. It depends on FAD as a cofactor.

The protein resides in the cytoplasm. It catalyses the reaction uridine(54) in tRNA + (6R)-5,10-methylene-5,6,7,8-tetrahydrofolate + NADH + H(+) = 5-methyluridine(54) in tRNA + (6S)-5,6,7,8-tetrahydrofolate + NAD(+). The catalysed reaction is uridine(54) in tRNA + (6R)-5,10-methylene-5,6,7,8-tetrahydrofolate + NADPH + H(+) = 5-methyluridine(54) in tRNA + (6S)-5,6,7,8-tetrahydrofolate + NADP(+). Functionally, catalyzes the folate-dependent formation of 5-methyl-uridine at position 54 (M-5-U54) in all tRNAs. The sequence is that of Methylenetetrahydrofolate--tRNA-(uracil-5-)-methyltransferase TrmFO from Synechococcus sp. (strain JA-2-3B'a(2-13)) (Cyanobacteria bacterium Yellowstone B-Prime).